The following is a 557-amino-acid chain: Urocanate hydratase (557 aa).

The segment at 1–20 (MSNPRHNEREVRSPRGDELN) is disordered. Residues 52–53 (GG), Q130, 176–178 (GMG), E196, R201, 242–243 (NA), 263–267 (QTSAH), 273–274 (YL), and Y322 contribute to the NAD(+) site. The active site involves C410. Residue G492 coordinates NAD(+).

Belongs to the urocanase family. Requires NAD(+) as cofactor.

The protein resides in the cytoplasm. It carries out the reaction 4-imidazolone-5-propanoate = trans-urocanate + H2O. It participates in amino-acid degradation; L-histidine degradation into L-glutamate; N-formimidoyl-L-glutamate from L-histidine: step 2/3. Its function is as follows. Catalyzes the conversion of urocanate to 4-imidazolone-5-propionate. In Brucella suis (strain ATCC 23445 / NCTC 10510), this protein is Urocanate hydratase.